Reading from the N-terminus, the 192-residue chain is Fe/S biogenesis protein NfuA (192 aa).

The [4Fe-4S] cluster site is built by Cys-149 and Cys-152.

The protein belongs to the NfuA family. As to quaternary structure, homodimer. [4Fe-4S] cluster is required as a cofactor.

In terms of biological role, involved in iron-sulfur cluster biogenesis. Binds a 4Fe-4S cluster, can transfer this cluster to apoproteins, and thereby intervenes in the maturation of Fe/S proteins. Could also act as a scaffold/chaperone for damaged Fe/S proteins. The polypeptide is Fe/S biogenesis protein NfuA (Shewanella sp. (strain MR-7)).